A 77-amino-acid polypeptide reads, in one-letter code: MDMRKLVGSNFARLRREKGLTQEEVEARSGFSQQYLSSLERGRRNPTVITLYELAQALGVSHVELVTPTDETPFGTR.

The HTH cro/C1-type domain occupies F11–L65. The H-T-H motif DNA-binding region spans Q22–R41.

This is an uncharacterized protein from Sinorhizobium fredii (strain NBRC 101917 / NGR234).